The primary structure comprises 568 residues: Proline--tRNA ligase (568 aa).

The protein belongs to the class-II aminoacyl-tRNA synthetase family. ProS type 1 subfamily. As to quaternary structure, homodimer.

It localises to the cytoplasm. The enzyme catalyses tRNA(Pro) + L-proline + ATP = L-prolyl-tRNA(Pro) + AMP + diphosphate. In terms of biological role, catalyzes the attachment of proline to tRNA(Pro) in a two-step reaction: proline is first activated by ATP to form Pro-AMP and then transferred to the acceptor end of tRNA(Pro). As ProRS can inadvertently accommodate and process non-cognate amino acids such as alanine and cysteine, to avoid such errors it has two additional distinct editing activities against alanine. One activity is designated as 'pretransfer' editing and involves the tRNA(Pro)-independent hydrolysis of activated Ala-AMP. The other activity is designated 'posttransfer' editing and involves deacylation of mischarged Ala-tRNA(Pro). The misacylated Cys-tRNA(Pro) is not edited by ProRS. The chain is Proline--tRNA ligase from Listeria monocytogenes serotype 4a (strain HCC23).